Consider the following 139-residue polypeptide: Large ribosomal subunit protein uL16 (139 aa).

The protein belongs to the universal ribosomal protein uL16 family. In terms of assembly, part of the 50S ribosomal subunit.

In terms of biological role, binds 23S rRNA and is also seen to make contacts with the A and possibly P site tRNAs. The chain is Large ribosomal subunit protein uL16 from Synechocystis sp. (strain ATCC 27184 / PCC 6803 / Kazusa).